A 555-amino-acid chain; its full sequence is CTP synthase (555 aa).

The segment at 1–271 is amidoligase domain; it reads MVKRGKKTKY…DDKLAELFNI (271 aa). Ser19 serves as a coordination point for CTP. Ser19 contributes to the UTP binding site. Residues 20–25 and Asp77 each bind ATP; that span reads SLGKGL. Mg(2+) contacts are provided by Asp77 and Glu145. Residues 152–154, 192–197, and Lys228 each bind CTP; these read DIE and KTKPTQ. Residues 192-197 and Lys228 each bind UTP; that span reads KTKPTQ. The Glutamine amidotransferase type-1 domain maps to 297-537; it reads RIGIVGKYVE…VKAALEHRDA (241 aa). Gly358 serves as a coordination point for L-glutamine. Catalysis depends on Cys385, which acts as the Nucleophile; for glutamine hydrolysis. Residues 386–389, Glu409, and Arg466 contribute to the L-glutamine site; that span reads LGLQ. Catalysis depends on residues His510 and Glu512. The tract at residues 535–555 is disordered; that stretch reads RDAQQRQPPAEVKKLAVGKNG.

The protein belongs to the CTP synthase family. Homotetramer.

It catalyses the reaction UTP + L-glutamine + ATP + H2O = CTP + L-glutamate + ADP + phosphate + 2 H(+). The enzyme catalyses L-glutamine + H2O = L-glutamate + NH4(+). It carries out the reaction UTP + NH4(+) + ATP = CTP + ADP + phosphate + 2 H(+). Its pathway is pyrimidine metabolism; CTP biosynthesis via de novo pathway; CTP from UDP: step 2/2. Its activity is regulated as follows. Allosterically activated by GTP, when glutamine is the substrate; GTP has no effect on the reaction when ammonia is the substrate. The allosteric effector GTP functions by stabilizing the protein conformation that binds the tetrahedral intermediate(s) formed during glutamine hydrolysis. Inhibited by the product CTP, via allosteric rather than competitive inhibition. Functionally, catalyzes the ATP-dependent amination of UTP to CTP with either L-glutamine or ammonia as the source of nitrogen. Regulates intracellular CTP levels through interactions with the four ribonucleotide triphosphates. This is CTP synthase from Anaeromyxobacter sp. (strain K).